The chain runs to 85 residues: Large ribosomal subunit protein bL27 (85 aa).

Belongs to the bacterial ribosomal protein bL27 family.

The protein is Large ribosomal subunit protein bL27 of Mycobacteroides abscessus (strain ATCC 19977 / DSM 44196 / CCUG 20993 / CIP 104536 / JCM 13569 / NCTC 13031 / TMC 1543 / L948) (Mycobacterium abscessus).